The sequence spans 98 residues: NADH-ubiquinone oxidoreductase chain 4L (98 aa).

Transmembrane regions (helical) follow at residues 1–21, 29–49, and 61–81; these read MTLI…GLLM, ALLC…LTIL, and IILL…LVTI.

Belongs to the complex I subunit 4L family. Core subunit of respiratory chain NADH dehydrogenase (Complex I) which is composed of 45 different subunits.

It is found in the mitochondrion inner membrane. It catalyses the reaction a ubiquinone + NADH + 5 H(+)(in) = a ubiquinol + NAD(+) + 4 H(+)(out). Core subunit of the mitochondrial membrane respiratory chain NADH dehydrogenase (Complex I) which catalyzes electron transfer from NADH through the respiratory chain, using ubiquinone as an electron acceptor. Part of the enzyme membrane arm which is embedded in the lipid bilayer and involved in proton translocation. The protein is NADH-ubiquinone oxidoreductase chain 4L (MT-ND4L) of Eubalaena australis (Southern right whale).